The primary structure comprises 377 residues: Chaperone MoxR1 (377 aa).

Residues 1–33 (MTSAGGFPAGAGGYQTPGGHSASPAHEAPPGGA) form a disordered region. Gly residues predominate over residues 7–16 (FPAGAGGYQT). Residues 19-33 (GHSASPAHEAPPGGA) show a composition bias toward low complexity. 78–85 (GVPGVAKT) contacts ATP.

This sequence belongs to the MoxR family. As to quaternary structure, interacts with RipA. Interacts with host Toll-like receptor 4 (TLR4).

In terms of biological role, displays ATP-enhanced chaperone activity. Required for the proper folding of the peptidoglycan endopeptidase RipA and its secretion through the TAT secretion system. In vitro, prevents thermal aggregation of MalZ protein and protects the functional activity of the restriction enzyme NdeI from thermal inactivation. Could be a moonlighting protein that uses a multipronged approach to dampen host-directed immunity for efficient replication, survival and pathogenesis. Can enhance virulence by inhibiting autophagy and apoptosis, and disrupting cellular bioenergetics. Binds and activates host TLR4 on the surface of macrophage cells, leading to the activation of the host NFKB and MAPK signaling cascades and enhanced secretion of proinflammatory cytokines. Inhibits autophagic flux via activation of PI3K-AKT-MTOR-ULK1 signaling cascade and represses apoptosis via inhibiting protooncogene c-FOS and MAPK JNK1/2. Also induces robust disruption of cellular bioenergetics by metabolic reprogramming to rewire the citric acid cycle intermediates for its benefit. The polypeptide is Chaperone MoxR1 (Mycobacterium tuberculosis (strain ATCC 25618 / H37Rv)).